The chain runs to 2151 residues: RNA-directed RNA polymerase L (2151 aa).

Residues His36, Glu54, Asp97, Glu110, and Val111 each coordinate Mn(2+). Lys124 (for endonuclease activity) is an active-site residue. A RdRp catalytic domain is found at 956–1142 (NGKFIRMKRK…SVNTEMWKSM (187 aa)). Asp1099 lines the Mg(2+) pocket.

The protein belongs to the Bunyavirales RNA polymerase family. In terms of assembly, interacts with the viral nucleoprotein. Requires Mn(2+) as cofactor. Mg(2+) is required as a cofactor.

Its subcellular location is the host cytoplasm. It is found in the host perinuclear region. It carries out the reaction RNA(n) + a ribonucleoside 5'-triphosphate = RNA(n+1) + diphosphate. Its function is as follows. RNA-dependent RNA polymerase, which is responsible for the replication and transcription of the viral RNA genome using antigenomic RNA as an intermediate. During transcription, synthesizes subgenomic RNAs and assures their capping by a cap-snatching mechanism, which involves the endonuclease activity cleaving the host capped pre-mRNAs. These short capped RNAs are then used as primers for viral transcription. Cleaves ssRNA substrates but not DNA. Seems to downregulate the expression of its own and heterologous mRNAs through its endonuclease activity. This is RNA-directed RNA polymerase L from Apodemus agrarius (Eurasian field mouse).